Here is a 335-residue protein sequence, read N- to C-terminus: Lipoyl synthase (335 aa).

Residues Cys55, Cys60, Cys66, Cys81, Cys85, Cys88, and Ser292 each contribute to the [4Fe-4S] cluster site. Residues 67 to 281 (WEDREATFLI…SKAAEEIGFL (215 aa)) enclose the Radical SAM core domain.

Belongs to the radical SAM superfamily. Lipoyl synthase family. The cofactor is [4Fe-4S] cluster.

It localises to the cytoplasm. The catalysed reaction is [[Fe-S] cluster scaffold protein carrying a second [4Fe-4S](2+) cluster] + N(6)-octanoyl-L-lysyl-[protein] + 2 oxidized [2Fe-2S]-[ferredoxin] + 2 S-adenosyl-L-methionine + 4 H(+) = [[Fe-S] cluster scaffold protein] + N(6)-[(R)-dihydrolipoyl]-L-lysyl-[protein] + 4 Fe(3+) + 2 hydrogen sulfide + 2 5'-deoxyadenosine + 2 L-methionine + 2 reduced [2Fe-2S]-[ferredoxin]. It functions in the pathway protein modification; protein lipoylation via endogenous pathway; protein N(6)-(lipoyl)lysine from octanoyl-[acyl-carrier-protein]: step 2/2. Functionally, catalyzes the radical-mediated insertion of two sulfur atoms into the C-6 and C-8 positions of the octanoyl moiety bound to the lipoyl domains of lipoate-dependent enzymes, thereby converting the octanoylated domains into lipoylated derivatives. This Kocuria rhizophila (strain ATCC 9341 / DSM 348 / NBRC 103217 / DC2201) protein is Lipoyl synthase.